The primary structure comprises 733 residues: Photosystem I P700 chlorophyll a apoprotein A2 (733 aa).

Transmembrane regions (helical) follow at residues 46–69, 134–157, 174–198, 272–290, 329–352, 368–394, 416–438, and 516–534; these read IFAS…FHVA, LYLG…LHLQ, LNHH…HVAI, IAHH…GHMY, LHMQ…QHMY, AALY…IFFV, AIIS…LYIH, and FLVH…LILV. The [4Fe-4S] cluster site is built by C558 and C567. 2 helical membrane-spanning segments follow: residues 574–595 and 642–664; these read AFYL…YWHW and LSVW…MFLI. Chlorophyll a-binding residues include H653, M661, and Y669. W670 contacts phylloquinone. The helical transmembrane segment at 706-726 threads the bilayer; it reads LVGLVHFTVGYVLTYAAFVIA.

Belongs to the PsaA/PsaB family. The PsaA/B heterodimer binds the P700 chlorophyll special pair and subsequent electron acceptors. PSI consists of a core antenna complex that captures photons, and an electron transfer chain that converts photonic excitation into a charge separation. The eukaryotic PSI reaction center is composed of at least 11 subunits. The cofactor is P700 is a chlorophyll a/chlorophyll a' dimer, A0 is one or more chlorophyll a, A1 is one or both phylloquinones and FX is a shared 4Fe-4S iron-sulfur center..

The protein localises to the plastid. It localises to the chloroplast thylakoid membrane. The enzyme catalyses reduced [plastocyanin] + hnu + oxidized [2Fe-2S]-[ferredoxin] = oxidized [plastocyanin] + reduced [2Fe-2S]-[ferredoxin]. PsaA and PsaB bind P700, the primary electron donor of photosystem I (PSI), as well as the electron acceptors A0, A1 and FX. PSI is a plastocyanin/cytochrome c6-ferredoxin oxidoreductase, converting photonic excitation into a charge separation, which transfers an electron from the donor P700 chlorophyll pair to the spectroscopically characterized acceptors A0, A1, FX, FA and FB in turn. Oxidized P700 is reduced on the lumenal side of the thylakoid membrane by plastocyanin or cytochrome c6. This is Photosystem I P700 chlorophyll a apoprotein A2 from Phaeodactylum tricornutum (strain CCAP 1055/1).